Consider the following 94-residue polypeptide: Large ribosomal subunit protein uL23 (94 aa).

This sequence belongs to the universal ribosomal protein uL23 family. In terms of assembly, part of the 50S ribosomal subunit. Contacts protein L29, and trigger factor when it is bound to the ribosome.

In terms of biological role, one of the early assembly proteins it binds 23S rRNA. One of the proteins that surrounds the polypeptide exit tunnel on the outside of the ribosome. Forms the main docking site for trigger factor binding to the ribosome. The chain is Large ribosomal subunit protein uL23 from Symbiobacterium thermophilum (strain DSM 24528 / JCM 14929 / IAM 14863 / T).